Consider the following 882-residue polypeptide: Leucine--tRNA ligase (882 aa).

Residues 43–53 carry the 'HIGH' region motif; sequence PYPSGNLHMGH. The short motif at 632-636 is the 'KMSKS' region element; the sequence is TMSKS. Residue Lys635 coordinates ATP.

It belongs to the class-I aminoacyl-tRNA synthetase family.

Its subcellular location is the cytoplasm. The catalysed reaction is tRNA(Leu) + L-leucine + ATP = L-leucyl-tRNA(Leu) + AMP + diphosphate. This is Leucine--tRNA ligase from Synechococcus sp. (strain JA-2-3B'a(2-13)) (Cyanobacteria bacterium Yellowstone B-Prime).